A 417-amino-acid chain; its full sequence is NADH-quinone oxidoreductase subunit D (417 aa).

It belongs to the complex I 49 kDa subunit family. As to quaternary structure, NDH-1 is composed of 14 different subunits. Subunits NuoB, C, D, E, F, and G constitute the peripheral sector of the complex.

It is found in the cell inner membrane. The enzyme catalyses a quinone + NADH + 5 H(+)(in) = a quinol + NAD(+) + 4 H(+)(out). In terms of biological role, NDH-1 shuttles electrons from NADH, via FMN and iron-sulfur (Fe-S) centers, to quinones in the respiratory chain. The immediate electron acceptor for the enzyme in this species is believed to be ubiquinone. Couples the redox reaction to proton translocation (for every two electrons transferred, four hydrogen ions are translocated across the cytoplasmic membrane), and thus conserves the redox energy in a proton gradient. In Chromobacterium violaceum (strain ATCC 12472 / DSM 30191 / JCM 1249 / CCUG 213 / NBRC 12614 / NCIMB 9131 / NCTC 9757 / MK), this protein is NADH-quinone oxidoreductase subunit D.